The chain runs to 388 residues: Succinate--CoA ligase [ADP-forming] subunit beta (388 aa).

An ATP-grasp domain is found at lysine 9–lysine 236. Residues lysine 45, glycine 52 to glycine 54, glutamate 91, serine 94, and glutamate 99 each bind ATP. Mg(2+) is bound by residues asparagine 191 and aspartate 205. Substrate contacts are provided by residues asparagine 256 and glycine 318–threonine 320.

Belongs to the succinate/malate CoA ligase beta subunit family. As to quaternary structure, heterotetramer of two alpha and two beta subunits. Mg(2+) serves as cofactor.

The enzyme catalyses succinate + ATP + CoA = succinyl-CoA + ADP + phosphate. It catalyses the reaction GTP + succinate + CoA = succinyl-CoA + GDP + phosphate. It functions in the pathway carbohydrate metabolism; tricarboxylic acid cycle; succinate from succinyl-CoA (ligase route): step 1/1. In terms of biological role, succinyl-CoA synthetase functions in the citric acid cycle (TCA), coupling the hydrolysis of succinyl-CoA to the synthesis of either ATP or GTP and thus represents the only step of substrate-level phosphorylation in the TCA. The beta subunit provides nucleotide specificity of the enzyme and binds the substrate succinate, while the binding sites for coenzyme A and phosphate are found in the alpha subunit. This is Succinate--CoA ligase [ADP-forming] subunit beta from Parafrankia sp. (strain EAN1pec).